The primary structure comprises 208 residues: Small ribosomal subunit protein uS4B (208 aa).

The 66-residue stretch at 95 to 160 (KRLDNVVFRL…NQVYMAAKQA (66 aa)) folds into the S4 RNA-binding domain.

Belongs to the universal ribosomal protein uS4 family. In terms of assembly, part of the 30S ribosomal subunit. Contacts protein S5. The interaction surface between S4 and S5 is involved in control of translational fidelity.

One of the primary rRNA binding proteins, it binds directly to 16S rRNA where it nucleates assembly of the body of the 30S subunit. In terms of biological role, with S5 and S12 plays an important role in translational accuracy. The sequence is that of Small ribosomal subunit protein uS4B from Bdellovibrio bacteriovorus (strain ATCC 15356 / DSM 50701 / NCIMB 9529 / HD100).